The following is a 194-amino-acid chain: Probable GTP-binding protein EngB (194 aa).

An EngB-type G domain is found at 19–193 (DCIQICFWGR…VLFIEENIFK (175 aa)). GTP contacts are provided by residues 27–34 (GRSNVGKS), 53–57 (GRTQF), 70–73 (DLPG), 137–140 (TKID), and 172–174 (VSS). Residues serine 34 and threonine 55 each coordinate Mg(2+).

This sequence belongs to the TRAFAC class TrmE-Era-EngA-EngB-Septin-like GTPase superfamily. EngB GTPase family. Requires Mg(2+) as cofactor.

Its function is as follows. Necessary for normal cell division and for the maintenance of normal septation. This is Probable GTP-binding protein EngB from Mycoplasmopsis agalactiae (strain NCTC 10123 / CIP 59.7 / PG2) (Mycoplasma agalactiae).